The following is a 419-amino-acid chain: Imidazolonepropionase (419 aa).

2 residues coordinate Fe(3+): His82 and His84. The Zn(2+) site is built by His82 and His84. Positions 91, 154, and 187 each coordinate 4-imidazolone-5-propanoate. Tyr154 is an N-formimidoyl-L-glutamate binding site. His252 is a binding site for Fe(3+). His252 serves as a coordination point for Zn(2+). Residue Glu255 coordinates 4-imidazolone-5-propanoate. Fe(3+) is bound at residue Asp326. Asp326 provides a ligand contact to Zn(2+). Residues Asn328 and Gly330 each contribute to the N-formimidoyl-L-glutamate site. Ser331 lines the 4-imidazolone-5-propanoate pocket.

The protein belongs to the metallo-dependent hydrolases superfamily. HutI family. Zn(2+) is required as a cofactor. Fe(3+) serves as cofactor.

It is found in the cytoplasm. It carries out the reaction 4-imidazolone-5-propanoate + H2O = N-formimidoyl-L-glutamate. It functions in the pathway amino-acid degradation; L-histidine degradation into L-glutamate; N-formimidoyl-L-glutamate from L-histidine: step 3/3. Its function is as follows. Catalyzes the hydrolytic cleavage of the carbon-nitrogen bond in imidazolone-5-propanoate to yield N-formimidoyl-L-glutamate. It is the third step in the universal histidine degradation pathway. In Clostridium tetani (strain Massachusetts / E88), this protein is Imidazolonepropionase.